The sequence spans 250 residues: MTKSFEIVFAVPMECQSCVDSVSSSLKSLNGISKYDIDLKSNLVTTEGSVPPSEIVKAIQSTGKDAIIRGTGAPNSAAVCILESFDPKDIQQPVKGLARIVSVGANDLVVDLTVNGLPQGVYYPSIRKSGNLSKGALSTGECFYPLGPLEVDQPVSESTTINSLGAASPTVEEGSLYAGQGFLHADLNISDLIGRSVILSKLKDKTAPDSLCGVIARSAGAWENDKQVCSCSGKTVWQERSEALAKGLKS.

Residues 4–67 (SFEIVFAVPM…AIQSTGKDAI (64 aa)) enclose the HMA domain. Residues cysteine 15, cysteine 18, cysteine 229, and cysteine 231 each coordinate Cu cation.

It belongs to the CCS1 family. Requires Cu(2+) as cofactor.

It is found in the cytoplasm. Functionally, copper chaperone for superoxide dismutase 1 (SOD1). Binds copper ions and delivers them specifically to SOD1. The chain is Superoxide dismutase 1 copper chaperone (CCS1) from Debaryomyces hansenii (strain ATCC 36239 / CBS 767 / BCRC 21394 / JCM 1990 / NBRC 0083 / IGC 2968) (Yeast).